The chain runs to 729 residues: Catalase-peroxidase (729 aa).

Positions 95–218 form a cross-link, tryptophyl-tyrosyl-methioninium (Trp-Tyr) (with M-244); that stretch reads WHSAGTYRGA…LAAVEMGLVY (124 aa). Catalysis depends on histidine 96, which acts as the Proton acceptor. Positions 218 to 244 form a cross-link, tryptophyl-tyrosyl-methioninium (Tyr-Met) (with W-95); that stretch reads YVNPEGPHGHPDPVASGPDVRDTFARM. Residue histidine 259 coordinates heme b.

Belongs to the peroxidase family. Peroxidase/catalase subfamily. As to quaternary structure, homodimer or homotetramer. Requires heme b as cofactor. Post-translationally, formation of the three residue Trp-Tyr-Met cross-link is important for the catalase, but not the peroxidase activity of the enzyme.

It carries out the reaction H2O2 + AH2 = A + 2 H2O. The catalysed reaction is 2 H2O2 = O2 + 2 H2O. Bifunctional enzyme with both catalase and broad-spectrum peroxidase activity. The protein is Catalase-peroxidase of Synechococcus sp. (strain CC9605).